The primary structure comprises 396 residues: Cystathionine beta-lyase (396 aa).

Residue Lys211 is modified to N6-(pyridoxal phosphate)lysine.

Belongs to the trans-sulfuration enzymes family. In terms of assembly, homotetramer. Requires pyridoxal 5'-phosphate as cofactor.

Its subcellular location is the cytoplasm. It catalyses the reaction L,L-cystathionine + H2O = L-homocysteine + pyruvate + NH4(+). The enzyme catalyses an S-substituted L-cysteine + H2O = a thiol + pyruvate + NH4(+). It participates in amino-acid biosynthesis; L-methionine biosynthesis via de novo pathway; L-homocysteine from L-cystathionine: step 1/1. Catalyzes the cleavage of cystathionine to homocysteine, pyruvate and ammonia during methionine biosynthesis. The chain is Cystathionine beta-lyase (metC) from Haemophilus influenzae (strain ATCC 51907 / DSM 11121 / KW20 / Rd).